The following is a 369-amino-acid chain: Chorismate synthase (369 aa).

NADP(+) contacts are provided by Arg48 and Arg54. FMN is bound by residues 125–127 (RSS), 238–239 (NA), Gly278, 293–297 (KPTSS), and Arg319.

Belongs to the chorismate synthase family. Homotetramer. Requires FMNH2 as cofactor.

It catalyses the reaction 5-O-(1-carboxyvinyl)-3-phosphoshikimate = chorismate + phosphate. Its pathway is metabolic intermediate biosynthesis; chorismate biosynthesis; chorismate from D-erythrose 4-phosphate and phosphoenolpyruvate: step 7/7. Catalyzes the anti-1,4-elimination of the C-3 phosphate and the C-6 proR hydrogen from 5-enolpyruvylshikimate-3-phosphate (EPSP) to yield chorismate, which is the branch point compound that serves as the starting substrate for the three terminal pathways of aromatic amino acid biosynthesis. This reaction introduces a second double bond into the aromatic ring system. The protein is Chorismate synthase of Cupriavidus necator (strain ATCC 17699 / DSM 428 / KCTC 22496 / NCIMB 10442 / H16 / Stanier 337) (Ralstonia eutropha).